Here is a 308-residue protein sequence, read N- to C-terminus: UPF0026 protein jhp_0109 (308 aa).

One can recognise a Radical SAM core domain in the interval 18–247 (FGKSLGVDLS…VSLPKRSTAQ (230 aa)). Positions 33, 37, and 40 each coordinate [4Fe-4S] cluster.

The protein belongs to the UPF0026 family. [4Fe-4S] cluster is required as a cofactor.

This Helicobacter pylori (strain J99 / ATCC 700824) (Campylobacter pylori J99) protein is UPF0026 protein jhp_0109.